The chain runs to 663 residues: Probable serine/threonine-protein kinase DDB_G0283301 (663 aa).

The Protein kinase domain occupies 312–586; that stretch reads IERRNELGRG…EECVERLITL (275 aa). ATP is bound by residues 318–326 and Lys348; that span reads LGRGGNGTV. Asp440 (proton acceptor) is an active-site residue.

It belongs to the protein kinase superfamily. Ser/Thr protein kinase family.

It catalyses the reaction L-seryl-[protein] + ATP = O-phospho-L-seryl-[protein] + ADP + H(+). The catalysed reaction is L-threonyl-[protein] + ATP = O-phospho-L-threonyl-[protein] + ADP + H(+). This is Probable serine/threonine-protein kinase DDB_G0283301 from Dictyostelium discoideum (Social amoeba).